Reading from the N-terminus, the 334-residue chain is Ferredoxin--NADP reductase (334 aa).

Residues Asp-33, Gln-41, Tyr-46, Ala-86, Phe-120, Asp-286, and Thr-327 each contribute to the FAD site.

The protein belongs to the ferredoxin--NADP reductase type 2 family. Homodimer. Requires FAD as cofactor.

It catalyses the reaction 2 reduced [2Fe-2S]-[ferredoxin] + NADP(+) + H(+) = 2 oxidized [2Fe-2S]-[ferredoxin] + NADPH. This is Ferredoxin--NADP reductase from Rickettsia typhi (strain ATCC VR-144 / Wilmington).